A 216-amino-acid polypeptide reads, in one-letter code: Thiamine-phosphate synthase (216 aa).

Residues 40-44 (QLRIK) and Asn72 contribute to the 4-amino-2-methyl-5-(diphosphooxymethyl)pyrimidine site. The Mg(2+) site is built by Asp73 and Asp92. Residue Ser111 coordinates 4-amino-2-methyl-5-(diphosphooxymethyl)pyrimidine. 137 to 139 (TTT) provides a ligand contact to 2-[(2R,5Z)-2-carboxy-4-methylthiazol-5(2H)-ylidene]ethyl phosphate. Residue Lys140 coordinates 4-amino-2-methyl-5-(diphosphooxymethyl)pyrimidine. Residues Gly169 and 189–190 (VS) contribute to the 2-[(2R,5Z)-2-carboxy-4-methylthiazol-5(2H)-ylidene]ethyl phosphate site.

It belongs to the thiamine-phosphate synthase family. Mg(2+) serves as cofactor.

It catalyses the reaction 2-[(2R,5Z)-2-carboxy-4-methylthiazol-5(2H)-ylidene]ethyl phosphate + 4-amino-2-methyl-5-(diphosphooxymethyl)pyrimidine + 2 H(+) = thiamine phosphate + CO2 + diphosphate. The catalysed reaction is 2-(2-carboxy-4-methylthiazol-5-yl)ethyl phosphate + 4-amino-2-methyl-5-(diphosphooxymethyl)pyrimidine + 2 H(+) = thiamine phosphate + CO2 + diphosphate. The enzyme catalyses 4-methyl-5-(2-phosphooxyethyl)-thiazole + 4-amino-2-methyl-5-(diphosphooxymethyl)pyrimidine + H(+) = thiamine phosphate + diphosphate. Its pathway is cofactor biosynthesis; thiamine diphosphate biosynthesis; thiamine phosphate from 4-amino-2-methyl-5-diphosphomethylpyrimidine and 4-methyl-5-(2-phosphoethyl)-thiazole: step 1/1. Condenses 4-methyl-5-(beta-hydroxyethyl)thiazole monophosphate (THZ-P) and 2-methyl-4-amino-5-hydroxymethyl pyrimidine pyrophosphate (HMP-PP) to form thiamine monophosphate (TMP). The sequence is that of Thiamine-phosphate synthase from Photorhabdus laumondii subsp. laumondii (strain DSM 15139 / CIP 105565 / TT01) (Photorhabdus luminescens subsp. laumondii).